The following is a 721-amino-acid chain: Polyribonucleotide nucleotidyltransferase (721 aa).

Mg(2+)-binding residues include D490 and D496. Residues 557-623 (PRIISIKINP…RIAGLTKEAK (67 aa)) enclose the KH domain. The 69-residue stretch at 625-693 (GEEYEGTVVK…DRGKIDLIRP (69 aa)) folds into the S1 motif domain. A disordered region spans residues 693 to 721 (PELEGKIAPREPRAPRGGGDRGPRPPRRD).

The protein belongs to the polyribonucleotide nucleotidyltransferase family. Mg(2+) is required as a cofactor.

It localises to the cytoplasm. It carries out the reaction RNA(n+1) + phosphate = RNA(n) + a ribonucleoside 5'-diphosphate. In terms of biological role, involved in mRNA degradation. Catalyzes the phosphorolysis of single-stranded polyribonucleotides processively in the 3'- to 5'-direction. In Deinococcus deserti (strain DSM 17065 / CIP 109153 / LMG 22923 / VCD115), this protein is Polyribonucleotide nucleotidyltransferase.